Here is a 530-residue protein sequence, read N- to C-terminus: Transcription factor SPT20 homolog (530 aa).

The residue at position 296 (S296) is a Phosphoserine. The segment at 419–530 is disordered; the sequence is CPVKMSHSSS…PASSSQRHES (112 aa). Low complexity-rich tracts occupy residues 424-436 and 466-475; these read SHSS…LNSG and SSSGNSSSGN. At T490 the chain carries Phosphothreonine. Residues 514–530 show a composition bias toward low complexity; that stretch reads LSPAALSPASSSQRHES. Phosphoserine occurs at positions 515 and 520.

Belongs to the SPT20 family. Interacts with ATG9A. Interacts with MAPK14.

Its function is as follows. Required for MAP kinase p38 (MAPK11, MAPK12, MAPK13 and/or MAPK14) activation during gastrulation. Required for down-regulation of E-cadherin during gastrulation by regulating E-cadherin protein level downstream from NCK-interacting kinase (NIK) and independently of the regulation of transcription by FGF signaling and Snail. Required for starvation-induced ATG9A trafficking during autophagy. The chain is Transcription factor SPT20 homolog (Supt20h) from Rattus norvegicus (Rat).